We begin with the raw amino-acid sequence, 90 residues long: Probable dynein light chain 2, cytoplasmic (90 aa).

It belongs to the dynein light chain family.

It is found in the cytoplasm. Its subcellular location is the cytoskeleton. In terms of biological role, acts as one of several non-catalytic accessory components of a dynein complex. In Caenorhabditis elegans, this protein is Probable dynein light chain 2, cytoplasmic (dlc-2).